A 441-amino-acid polypeptide reads, in one-letter code: Leucine-rich repeat-containing protein 17 (441 aa).

The N-terminal stretch at 1–18 (MRVVTIVILLCFCKAAEL) is a signal peptide. LRR repeat units lie at residues 82–103 (DLLH…MFSK), 106–127 (KLKS…AFFG), and 130–151 (KLTT…VFIY). The LRRCT 1 domain maps to 163–214 (NPWHCTCEIETLISMLQIPRNRNLGNYAKCESPQEQKNKKLRQIKSEQLCNE). An LRRNT domain is found at 225-268 (QVSGRPPVIKPEVDSTFCHNYVFPIQTLDCKRKELKKVPNNIPP). LRR repeat units follow at residues 269–290 (DIVK…EFED), 293–314 (ELKK…AFLG), and 317–340 (HLEE…EDLY). The 53-residue stretch at 350-402 (NPWRCDYNIHYLYYWLKHHYNVHFNGLECKTPEEYKGWSVGKYIRSYYEECPK) folds into the LRRCT 2 domain.

As to expression, expressed in osteoblast cell lines. Well expressed in ovary, heart, pancreas, skeletal muscle, lung, and fetal kidney and lung and only at the basal levels in the other tissues examined including adult kidney. More expressed in S-type neuroblastoma cells than in N-type neuroblastoma cells.

The protein resides in the secreted. The protein localises to the extracellular space. In terms of biological role, involved in bone homeostasis. Acts as a negative regulator of RANKL-induced osteoclast precursor differentiation from bone marrow precursors. This is Leucine-rich repeat-containing protein 17 (LRRC17) from Homo sapiens (Human).